We begin with the raw amino-acid sequence, 256 residues long: Thiazole synthase (256 aa).

Lys-95 acts as the Schiff-base intermediate with DXP in catalysis. 1-deoxy-D-xylulose 5-phosphate is bound by residues Gly-156, 182–183, and 204–205; these read AG and NT.

Belongs to the ThiG family. As to quaternary structure, homotetramer. Forms heterodimers with either ThiH or ThiS.

It localises to the cytoplasm. The catalysed reaction is [ThiS sulfur-carrier protein]-C-terminal-Gly-aminoethanethioate + 2-iminoacetate + 1-deoxy-D-xylulose 5-phosphate = [ThiS sulfur-carrier protein]-C-terminal Gly-Gly + 2-[(2R,5Z)-2-carboxy-4-methylthiazol-5(2H)-ylidene]ethyl phosphate + 2 H2O + H(+). Its pathway is cofactor biosynthesis; thiamine diphosphate biosynthesis. Its function is as follows. Catalyzes the rearrangement of 1-deoxy-D-xylulose 5-phosphate (DXP) to produce the thiazole phosphate moiety of thiamine. Sulfur is provided by the thiocarboxylate moiety of the carrier protein ThiS. In vitro, sulfur can be provided by H(2)S. In Alteromonas mediterranea (strain DSM 17117 / CIP 110805 / LMG 28347 / Deep ecotype), this protein is Thiazole synthase.